The following is an 878-amino-acid chain: Alanine--tRNA ligase (878 aa).

The Zn(2+) site is built by His566, His570, Cys668, and His672.

It belongs to the class-II aminoacyl-tRNA synthetase family. Zn(2+) serves as cofactor.

It localises to the cytoplasm. The catalysed reaction is tRNA(Ala) + L-alanine + ATP = L-alanyl-tRNA(Ala) + AMP + diphosphate. Catalyzes the attachment of alanine to tRNA(Ala) in a two-step reaction: alanine is first activated by ATP to form Ala-AMP and then transferred to the acceptor end of tRNA(Ala). Also edits incorrectly charged Ser-tRNA(Ala) and Gly-tRNA(Ala) via its editing domain. The polypeptide is Alanine--tRNA ligase (Geobacillus thermodenitrificans (strain NG80-2)).